We begin with the raw amino-acid sequence, 168 residues long: Photosystem I assembly protein Ycf3 (168 aa).

TPR repeat units lie at residues 35–68 (AFTY…EIDP), 72–105 (SYIL…NPFL), and 120–153 (GEQA…TPGN).

It belongs to the Ycf3 family.

The protein resides in the plastid. Its subcellular location is the chloroplast thylakoid membrane. Essential for the assembly of the photosystem I (PSI) complex. May act as a chaperone-like factor to guide the assembly of the PSI subunits. The chain is Photosystem I assembly protein Ycf3 from Lactuca sativa (Garden lettuce).